Here is an 800-residue protein sequence, read N- to C-terminus: Ribosome-releasing factor 2, mitochondrial (800 aa).

The region spanning 21 to 307 is the tr-type G domain; it reads SKVRNIGIIA…AIANYLPSPS (287 aa). Residues 30–37, 95–99, and 147–150 contribute to the GTP site; these read AHIDAGKT, DTPGH, and NKMD.

The protein belongs to the TRAFAC class translation factor GTPase superfamily. Classic translation factor GTPase family. EF-G/EF-2 subfamily.

The protein resides in the mitochondrion. Its function is as follows. Mitochondrial GTPase that mediates the disassembly of ribosomes from messenger RNA at the termination of mitochondrial protein biosynthesis. Not involved in the GTP-dependent ribosomal translocation step during translation elongation. The sequence is that of Ribosome-releasing factor 2, mitochondrial from Kluyveromyces lactis (strain ATCC 8585 / CBS 2359 / DSM 70799 / NBRC 1267 / NRRL Y-1140 / WM37) (Yeast).